Here is a 278-residue protein sequence, read N- to C-terminus: Probable esterase TOX9 (278 aa).

Active-site charge relay system residues include serine 119, aspartate 222, and histidine 250.

Belongs to the LovG family.

The protein operates within mycotoxin biosynthesis. Functionally, probable esterase; part of the Tox1A locus, one of the 2 loci that mediate the biosynthesis of T-toxin, a family of linear polyketides 37 to 45 carbons in length, of which the major component is 41 carbons, and which leads to high virulence to maize. One of the PKSs (PKS1 or PKS2) could synthesize a precursor, used subsequently by the other PKS as starter unit, to add additional carbons. Variability in the length of the final carbon backbone C35-47 could be achieved by varying the number of condensation cycles, or use of different starter or extender units or might be due to decarboxylation of the penultimate product, catalyzed by DEC1. Additional proteins are required for the biosynthesis of T-toxin, including oxidoreductases RED1, RED2, RED3, LAM1 and OXI1, as well as esterase TOX9. The chain is Probable esterase TOX9 from Cochliobolus heterostrophus (strain C4 / ATCC 48331 / race T) (Southern corn leaf blight fungus).